A 603-amino-acid polypeptide reads, in one-letter code: Insulin-like growth factor-binding protein complex acid labile subunit (603 aa).

The first 23 residues, 1 to 23, serve as a signal peptide directing secretion; the sequence is MALRTGSPALVVLLAFWVALGPC. The LRRNT domain occupies 32-74; sequence ASADAEGPQCPVTCTCSYDDYTDELSVFCSSRNLTQLPDGIPV. 2 disulfide bridges follow: Cys-41–Cys-47 and Cys-45–Cys-60. N-linked (GlcNAc...) asparagine glycans are attached at residues Asn-64, Asn-85, and Asn-96. LRR repeat units follow at residues 75 to 96, 99 to 120, 123 to 144, 147 to 168, 171 to 192, 195 to 216, 219 to 240, 243 to 264, 267 to 288, 291 to 312, 315 to 336, 339 to 360, 363 to 384, 387 to 408, 411 to 432, 435 to 456, 459 to 480, 483 to 504, and 507 to 528; these read STRALWLDGNNLSSIPSAAFQN, SLDFLNLQGSWLRSLEPQALLG, NLYHLHLERNLLRSLAAGLFRH, SLASLSLGNNLLGRLEEGLFRG, HLWDLNLGWNSLVVLPDTVFQG, NLHELVLAGNKLTYLQPALLCG, ELRELDLSRNALRSVKANVFIH, RLQKLYLDRNLITAVAPRAFLG, ALRWLDLSHNRVAGLLEDTFPG, GLHVLRLAHNAITSLRPRTFKD, FLEELQLGHNRIRQLGEKTFEG, QLEVLTLNDNQIHEVKVGAFFG, NVAVMNLSGNCLRSLPEHVFQG, RLHSLHLEHSCLGRIRLHTFAG, GLRRLFLRDNSISSIEEQSLAG, ELLELDLTANQLTHLPRQLFQG, QLEYLLLSNNQLTMLSEDVLGP, RAFWLDLSHNRLETPAEGLFSS, and RLRYLNLRNNSLQTFVPQPGLE. Asn-368 is a glycosylation site (N-linked (GlcNAc...) asparagine). An N-linked (GlcNAc...) asparagine glycan is attached at Asn-515. Positions 535–603 constitute an LRRCT domain; the sequence is NPWDCSCPLK…DISETLFVHC (69 aa). Cystine bridges form between Cys-539-Cys-581, Cys-541-Cys-603, and Cys-565-Cys-570. 2 N-linked (GlcNAc...) asparagine glycosylation sites follow: Asn-578 and Asn-586.

As to quaternary structure, forms a ternary complex with IGF1 and IGFBP3.

The protein resides in the secreted. It is found in the extracellular space. Functionally, may have an important role in regulating the access of circulating IGFs to the tissues. This is Insulin-like growth factor-binding protein complex acid labile subunit (Igfals) from Mus musculus (Mouse).